We begin with the raw amino-acid sequence, 195 residues long: Large ribosomal subunit protein eL6 (195 aa).

Phosphoserine is present on residues Ser-105 and Ser-115.

It belongs to the eukaryotic ribosomal protein eL6 family. Component of the large ribosomal subunit (LSU). Mature yeast ribosomes consist of a small (40S) and a large (60S) subunit. The 40S small subunit contains 1 molecule of ribosomal RNA (18S rRNA) and at least 33 different proteins. The large 60S subunit contains 3 rRNA molecules (25S, 5.8S and 5S rRNA) and at least 46 different proteins.

The protein resides in the cytoplasm. The protein localises to the nucleus. It is found in the nucleolus. Component of the ribosome, a large ribonucleoprotein complex responsible for the synthesis of proteins in the cell. The small ribosomal subunit (SSU) binds messenger RNAs (mRNAs) and translates the encoded message by selecting cognate aminoacyl-transfer RNA (tRNA) molecules. The large subunit (LSU) contains the ribosomal catalytic site termed the peptidyl transferase center (PTC), which catalyzes the formation of peptide bonds, thereby polymerizing the amino acids delivered by tRNAs into a polypeptide chain. The nascent polypeptides leave the ribosome through a tunnel in the LSU and interact with protein factors that function in enzymatic processing, targeting, and the membrane insertion of nascent chains at the exit of the ribosomal tunnel. In Schizosaccharomyces pombe (strain 972 / ATCC 24843) (Fission yeast), this protein is Large ribosomal subunit protein eL6 (rpl6).